The sequence spans 506 residues: Maturase K (506 aa).

This sequence belongs to the intron maturase 2 family. MatK subfamily.

Its subcellular location is the plastid. It localises to the chloroplast. Its function is as follows. Usually encoded in the trnK tRNA gene intron. Probably assists in splicing its own and other chloroplast group II introns. The protein is Maturase K of Rhododendron ferrugineum (Alpenrose).